Reading from the N-terminus, the 423-residue chain is Transmembrane protease serine 11E (423 aa).

Residues 1 to 18 (MYRSCVVRARKRTCVEPW) are Cytoplasmic-facing. A helical; Signal-anchor for type II membrane protein membrane pass occupies residues 19–39 (VIGIISFLSLIVLAVCIGLTV). Residues 40–423 (HYVRYNHRRT…RHWIASNTGI (384 aa)) lie on the Extracellular side of the membrane. An SEA domain is found at 48–166 (RTYNYYSTLS…ESVKIKKINK (119 aa)). Asn74, Asn165, Asn182, and Asn223 each carry an N-linked (GlcNAc...) asparagine glycan. 4 disulfides stabilise this stretch: Cys176–Cys297, Cys217–Cys233, Cys342–Cys358, and Cys369–Cys398. The 231-residue stretch at 192 to 422 (IVGGTPVEEE…FRHWIASNTG (231 aa)) folds into the Peptidase S1 domain. Active-site charge relay system residues include His232 and Asp277. Ser373 (charge relay system) is an active-site residue.

The protein belongs to the peptidase S1 family. In terms of assembly, forms a heterodimer with SERPINA5 and SERPINE1. Post-translationally, N-glycosylated. Expressed in epidermal, oral and male reproductive tissues.

It localises to the cell membrane. The protein localises to the secreted. With respect to regulation, inhibited by SERPINA5. In terms of biological role, serine protease which possesses both gelatinolytic and caseinolytic activities. Shows a preference for Arg in the P1 position. In Mus musculus (Mouse), this protein is Transmembrane protease serine 11E (Tmprss11e).